We begin with the raw amino-acid sequence, 118 residues long: MSEFAPICIYLVISLLVCLIPLGVPFLFASNGSTYPEKLSAYECGFDPFGDARSRFDIRFYLVSILFIIFDLEVTFFFPWAVSLNKIDLFGFWSMMVFLLILTIGFLYEWKKGALDWE.

3 consecutive transmembrane segments (helical) span residues 9–29, 62–82, and 87–107; these read IYLV…FLFA, LVSI…PWAV, and IDLF…IGFL.

This sequence belongs to the complex I subunit 3 family.

It is found in the mitochondrion membrane. It carries out the reaction a ubiquinone + NADH + 5 H(+)(in) = a ubiquinol + NAD(+) + 4 H(+)(out). In terms of biological role, core subunit of the mitochondrial membrane respiratory chain NADH dehydrogenase (Complex I) that is believed to belong to the minimal assembly required for catalysis. Complex I functions in the transfer of electrons from NADH to the respiratory chain. The immediate electron acceptor for the enzyme is believed to be ubiquinone. The chain is NADH-ubiquinone oxidoreductase chain 3 (NAD3) from Pinus sylvestris (Scotch pine).